The sequence spans 61 residues: Large ribosomal subunit protein uL30 (61 aa).

Belongs to the universal ribosomal protein uL30 family. Part of the 50S ribosomal subunit.

The protein is Large ribosomal subunit protein uL30 of Nitrosomonas europaea (strain ATCC 19718 / CIP 103999 / KCTC 2705 / NBRC 14298).